The chain runs to 125 residues: MNTPEHMTAVVQRYVAALNAGDLDGIVALFADDATVEDPVGSEPRSGTAAIREFYANSLKLPLAVELTQEVRAVANEAAFAFTVSFEYQGRKTVVAPIDHFRFNGAGKVVSMRALFGEKNIHAGA.

The Proton donor role is filled by Tyr-14. The Proton acceptor role is filled by Asp-38. Substrate is bound at residue Asp-99.

In terms of assembly, homodimer.

The catalysed reaction is a 3-oxo-Delta(5)-steroid = a 3-oxo-Delta(4)-steroid. The polypeptide is Steroid Delta-isomerase (ksi) (Comamonas testosteroni (Pseudomonas testosteroni)).